Reading from the N-terminus, the 226-residue chain is 2,3-bisphosphoglycerate-dependent phosphoglycerate mutase (226 aa).

Residues 8 to 15 (RHGQSQWN), 21 to 22 (TG), arginine 58, 112 to 115 (ERMY), lysine 123, 139 to 140 (RR), and 183 to 184 (GN) each bind substrate. The Tele-phosphohistidine intermediate role is filled by histidine 9. The active-site Proton donor/acceptor is glutamate 112.

Belongs to the phosphoglycerate mutase family. BPG-dependent PGAM subfamily.

It carries out the reaction (2R)-2-phosphoglycerate = (2R)-3-phosphoglycerate. Its pathway is carbohydrate degradation; glycolysis; pyruvate from D-glyceraldehyde 3-phosphate: step 3/5. Catalyzes the interconversion of 2-phosphoglycerate and 3-phosphoglycerate. This is 2,3-bisphosphoglycerate-dependent phosphoglycerate mutase from Protochlamydia amoebophila (strain UWE25).